Reading from the N-terminus, the 263-residue chain is Tryptophan synthase alpha chain (263 aa).

Catalysis depends on proton acceptor residues glutamate 41 and aspartate 52.

This sequence belongs to the TrpA family. As to quaternary structure, tetramer of two alpha and two beta chains.

It catalyses the reaction (1S,2R)-1-C-(indol-3-yl)glycerol 3-phosphate + L-serine = D-glyceraldehyde 3-phosphate + L-tryptophan + H2O. It participates in amino-acid biosynthesis; L-tryptophan biosynthesis; L-tryptophan from chorismate: step 5/5. Its function is as follows. The alpha subunit is responsible for the aldol cleavage of indoleglycerol phosphate to indole and glyceraldehyde 3-phosphate. The chain is Tryptophan synthase alpha chain from Geobacillus sp. (strain WCH70).